The chain runs to 996 residues: TBC1 domain family member 31 (996 aa).

WD repeat units lie at residues 33 to 74 (HSTS…LHGN), 75 to 116 (RFNL…TVTK), 117 to 157 (ELVS…LDTF), 158 to 200 (QRKR…CDTL), 201 to 248 (FCKY…ATGL), 249 to 296 (FRII…IQTC), and 297 to 334 (KLLF…NVYS). Residues 388–414 (TRVLKQDLTGDLENKENELSEGLNKKR) adopt a coiled-coil conformation. The Rab-GAP TBC domain occupies 424–599 (EYPTKYRMFI…RLFDNIFSNH (176 aa)). Residues 699 to 844 (ELDFLRERQT…LTTSQEAVAK (146 aa)) adopt a coiled-coil conformation. Residues 983 to 986 (RARN) are mediates direct interaction with PJA2.

Interacts with PJA2; the interaction is direct and recruits PJA2 to centrosomes. Interacts with OFD1; regulates its activity in cilium assembly. Interacts with PRKACA.

It is found in the cytoplasm. It localises to the cytoskeleton. The protein resides in the microtubule organizing center. Its subcellular location is the centrosome. The protein localises to the centriolar satellite. It is found in the cilium basal body. In terms of biological role, molecular adapter which is involved in cilium biogenesis. Part of a functional complex including OFD1 a centriolar protein involved in cilium assembly. Could regulate the cAMP-dependent phosphorylation of OFD1, and its subsequent ubiquitination by PJA2 which ultimately leads to its proteasomal degradation. The polypeptide is TBC1 domain family member 31 (Mus musculus (Mouse)).